Consider the following 439-residue polypeptide: Putative porin QuiX (439 aa).

The N-terminal stretch at 1–22 is a signal peptide; sequence MRHFFKLGLVSAAVLGSQMTLA.

The protein belongs to the OprB family.

Its subcellular location is the cell outer membrane. Could be involved in the transport of quinate or shikimate. This is Putative porin QuiX (quiX) from Acinetobacter baylyi (strain ATCC 33305 / BD413 / ADP1).